Reading from the N-terminus, the 1500-residue chain is Secreted chitinase LysM12 (1500 aa).

Positions 1-23 are cleaved as a signal peptide; that stretch reads MAPLWNGMAAGLLLSAAVVSGQA. N53, N225, N251, and N270 each carry an N-linked (GlcNAc...) asparagine glycan. 2 LysM domains span residues 303 to 348 and 367 to 415; these read RTQK…HVCC and ATTT…VICI. A Chitin-binding type-1 domain is found at 428–496; the sequence is DAECGPQVPG…TNGCISHCGM (69 aa). 4 disulfides stabilise this stretch: C431-C459, C453-C465, C458-C472, and C490-C494. Positions 507 to 879 constitute a GH18 domain; that stretch reads FRSVGYYESY…PGMILQMKSG (373 aa). Catalysis depends on E625, which acts as the Proton donor. Y626 serves as a coordination point for chitin. 2 N-linked (GlcNAc...) asparagine glycosylation sites follow: N721 and N800. W852 contributes to the chitin binding site. N892 and N983 each carry an N-linked (GlcNAc...) asparagine glycan. The tract at residues 1164–1193 is disordered; it reads IPKDIPYPDKTKRKDKDDDDNKKTEATDSE. Over residues 1169 to 1193 the composition is skewed to basic and acidic residues; the sequence is PYPDKTKRKDKDDDDNKKTEATDSE.

This sequence belongs to the glycosyl hydrolase 18 family. Chitinase class V subfamily.

The protein resides in the secreted. The enzyme catalyses Random endo-hydrolysis of N-acetyl-beta-D-glucosaminide (1-&gt;4)-beta-linkages in chitin and chitodextrins.. Functionally, secreted chitinase involved in the degradation of chitin, a component of the cell walls of fungi and exoskeletal elements of some animals (including worms and arthropods). Involved in pathogenesis via manipulation of host defenses for successful infection. The polypeptide is Secreted chitinase LysM12 (Penicillium expansum (Blue mold rot fungus)).